The sequence spans 102 residues: Large ribosomal subunit protein bL21 (102 aa).

This sequence belongs to the bacterial ribosomal protein bL21 family. In terms of assembly, part of the 50S ribosomal subunit. Contacts protein L20.

In terms of biological role, this protein binds to 23S rRNA in the presence of protein L20. This Campylobacter jejuni subsp. doylei (strain ATCC BAA-1458 / RM4099 / 269.97) protein is Large ribosomal subunit protein bL21.